An 83-amino-acid polypeptide reads, in one-letter code: CDC42 small effector protein 2 (83 aa).

Residues cysteine 10 and cysteine 11 are each lipidated (S-palmitoyl cysteine). The CRIB domain maps to 28–41 (IGEPTNFVHTAHVG). Residues serine 42 and serine 51 each carry the phosphoserine modification.

It belongs to the CDC42SE/SPEC family. Interacts with CDC42 (in GTP-bound form). Interacts weakly with RAC1 and not at all with RHOA.

Its subcellular location is the cytoplasm. The protein localises to the cytoskeleton. It is found in the cell membrane. It localises to the cell projection. The protein resides in the phagocytic cup. Probably involved in the organization of the actin cytoskeleton by acting downstream of CDC42, inducing actin filament assembly. Alters CDC42-induced cell shape changes. In activated T-cells, may play a role in CDC42-mediated F-actin accumulation at the immunological synapse. May play a role in early contractile events in phagocytosis in macrophages. This is CDC42 small effector protein 2 (Cdc42se2) from Rattus norvegicus (Rat).